A 394-amino-acid chain; its full sequence is 1-acylglycerol-3-phosphate O-acyltransferase ICT1 (394 aa).

The AB hydrolase-1 domain occupies 74–381; that stretch reads VLIHGYAASS…AGHNLFLDNP (308 aa). An HXXXXD motif motif is present at residues 374 to 379; sequence HNLFLD.

Belongs to the peptidase S33 family. ABHD4/ABHD5 subfamily.

It catalyses the reaction a 1-acyl-sn-glycero-3-phosphate + an acyl-CoA = a 1,2-diacyl-sn-glycero-3-phosphate + CoA. In terms of biological role, lysophosphatidic acid acyltransferase involved in membrane remodeling leading to increased organic solvent tolerance. Involved in resistance to azoles and copper. In Saccharomyces cerevisiae (strain ATCC 204508 / S288c) (Baker's yeast), this protein is 1-acylglycerol-3-phosphate O-acyltransferase ICT1 (ICT1).